The sequence spans 60 residues: Pepsin A (60 aa).

Positions 1–45 are cleaved as a propeptide — activation peptide; the sequence is FIIKVPLVKKKSLRKNLKEHGLLKDFLKKHSPNPASKYFPQEAAV.

This sequence belongs to the peptidase A1 family.

Its subcellular location is the secreted. It carries out the reaction Preferential cleavage: hydrophobic, preferably aromatic, residues in P1 and P1' positions. Cleaves 1-Phe-|-Val-2, 4-Gln-|-His-5, 13-Glu-|-Ala-14, 14-Ala-|-Leu-15, 15-Leu-|-Tyr-16, 16-Tyr-|-Leu-17, 23-Gly-|-Phe-24, 24-Phe-|-Phe-25 and 25-Phe-|-Tyr-26 bonds in the B chain of insulin.. Its function is as follows. Shows particularly broad specificity; although bonds involving phenylalanine and leucine are preferred, many others are also cleaved to some extent. In Ursus thibetanus (Asiatic black bear), this protein is Pepsin A (PGA).